The chain runs to 572 residues: Proline--tRNA ligase (572 aa).

It belongs to the class-II aminoacyl-tRNA synthetase family. ProS type 1 subfamily. As to quaternary structure, homodimer.

It localises to the cytoplasm. The catalysed reaction is tRNA(Pro) + L-proline + ATP = L-prolyl-tRNA(Pro) + AMP + diphosphate. In terms of biological role, catalyzes the attachment of proline to tRNA(Pro) in a two-step reaction: proline is first activated by ATP to form Pro-AMP and then transferred to the acceptor end of tRNA(Pro). As ProRS can inadvertently accommodate and process non-cognate amino acids such as alanine and cysteine, to avoid such errors it has two additional distinct editing activities against alanine. One activity is designated as 'pretransfer' editing and involves the tRNA(Pro)-independent hydrolysis of activated Ala-AMP. The other activity is designated 'posttransfer' editing and involves deacylation of mischarged Ala-tRNA(Pro). The misacylated Cys-tRNA(Pro) is not edited by ProRS. This Dichelobacter nodosus (strain VCS1703A) protein is Proline--tRNA ligase.